The primary structure comprises 66 residues: Large ribosomal subunit protein bL35 (66 aa).

Basic residues predominate over residues 1-46; the sequence is MPKMKTHRASAKRFKRTGNGGLKRHHAFTGHRFHGKTKKQRRHLRK. The segment at 1 to 50 is disordered; sequence MPKMKTHRASAKRFKRTGNGGLKRHHAFTGHRFHGKTKKQRRHLRKAAMV.

It belongs to the bacterial ribosomal protein bL35 family.

In Lactobacillus delbrueckii subsp. bulgaricus (strain ATCC 11842 / DSM 20081 / BCRC 10696 / JCM 1002 / NBRC 13953 / NCIMB 11778 / NCTC 12712 / WDCM 00102 / Lb 14), this protein is Large ribosomal subunit protein bL35.